The following is a 1217-amino-acid chain: Disease resistance protein RPS4 (1217 aa).

Residues 14–175 (PQHQVFINFR…EIVKAVKTAL (162 aa)) form the TIR domain. 23–28 (RGADLR) contacts NAD(+). The interval 33-34 (SH) is important for interaction with RRS1. Glu88 is a catalytic residue. One can recognise an NB-ARC domain in the interval 211 to 472 (EQRLKDLEEK…FRSQDKDYVE (262 aa)). LRR repeat units follow at residues 581-606 (MGNL…KINI), 614-636 (LKEV…DFNP), 637-659 (INLV…DKDT), 682-706 (AEKL…MKKM), 708-728 (MLAF…EMNL), 729-749 (ISLK…PLIS), 750-774 (DNIE…KLQR), 796-818 (LKAL…EIDI), 819-842 (SFLN…SVQY), 843-860 (LCLS…GISQ), and 861-887 (LSQL…NLQC). The segment at 1161-1195 (TTEGVDGRVNKKKKTRMDNGRPKKKQRSGRDDNQT) is disordered. The short motif at 1170-1177 (NKKKKTRM) is the Nuclear localization signal element.

The protein belongs to the disease resistance TIR-NB-LRR family. In terms of assembly, interacts with EDS1. Interacts with SRFR1. Interacts with RRS1.

The protein localises to the endomembrane system. The protein resides in the cytoplasm. It localises to the nucleus. The enzyme catalyses NAD(+) + H2O = ADP-D-ribose + nicotinamide + H(+). Functionally, disease resistance (R) protein that specifically recognizes the AvrRps4 type III effector avirulence protein from P.syringae. Resistance proteins guard the plant against pathogens that contain an appropriate avirulence protein via an indirect interaction with this avirulence protein. That triggers a defense system including the hypersensitive response, which restricts the pathogen growth. Probably acts as a NAD(+) hydrolase (NADase): in response to activation, catalyzes cleavage of NAD(+) into ADP-D-ribose (ADPR) and nicotinamide; NAD(+) cleavage triggering a defense system that promotes cell death. The combined presence of both regular and alternative RPS4 transcripts with truncated open reading frames (ORFs) is necessary for function. RPS4 function is regulated at multiple levels, including gene expression, alternative splicing, and protein stability. When over-expressed, confers temperature-conditioned EDS1-dependent auto-immunity. Heterodimerization with RRS1 is required to form a functional complex to recognize AvrRps4 and PopP2. Abscisic acid deficiency enhances nuclear accumulation of RPS4 and its cell death-inducing activity. This is Disease resistance protein RPS4 from Arabidopsis thaliana (Mouse-ear cress).